A 255-amino-acid chain; its full sequence is Menaquinone reductase, iron-sulfur cluster-binding subunit (255 aa).

4Fe-4S ferredoxin-type domains are found at residues 11-41 (WGMV…PQPD), 66-97 (HDVA…KNEE), and 99-128 (GIVS…FNWF). [4Fe-4S] cluster is bound by residues Cys-20, Cys-23, Cys-26, Cys-30, Cys-75, Cys-78, Cys-83, Cys-87, Cys-108, Cys-111, Cys-114, and Cys-118. Residues Cys-155, Cys-158, Cys-188, and Cys-192 each coordinate [3Fe-4S] cluster.

In terms of assembly, the Qrc complex is composed of four subunits: QrcA, QrcB, QrcC and QrcD. Can form a supercomplex with the [NiFe] hydrogenase HynA1 and the tetraheme Type I cytochrome c3 TpIc(3), its physiological electron donors. The cofactor is [4Fe-4S] cluster. [3Fe-4S] cluster serves as cofactor.

The protein localises to the periplasm. In terms of biological role, component of the respiratory Qrc complex, that catalyzes the reduction of the menaquinone pool using electrons transferred from the reduced periplasmic cytochrome c3, and which is probably involved in sulfate respiration. Is likely essential for growth on H(2) or formate since the periplasmic hydrogenases and/or formate dehydrogenases act as primary electron donors for the Qrc complex. QrcC is an electron-transferring subunit; its cubane iron sulfur clusters form a pathway for electron transfer between the hemes of QrcA and the membrane quinone pool. The polypeptide is Menaquinone reductase, iron-sulfur cluster-binding subunit (Nitratidesulfovibrio vulgaris (strain ATCC 29579 / DSM 644 / CCUG 34227 / NCIMB 8303 / VKM B-1760 / Hildenborough) (Desulfovibrio vulgaris)).